The primary structure comprises 168 residues: MVKDILARELRVVFCGINPGLSSAGTGFPFAHPANRFWKVIHLAGFTGRQLKPEEAQHLLDFRCGVTKFVDRPTVQANEVKLQEMRSGGHKLIEKIEHYQPAALAILGKQAFEQGFSQRGAQWGKQTMTIGDTQIWVLPNPSGLNRIRTEKLVEAYRELDESLVVDGL.

It belongs to the uracil-DNA glycosylase (UDG) superfamily. TDG/mug family. In terms of assembly, binds DNA as a monomer.

Its subcellular location is the cytoplasm. The enzyme catalyses Specifically hydrolyzes mismatched double-stranded DNA and polynucleotides, releasing free uracil.. Excises ethenocytosine and uracil, which can arise by alkylation or deamination of cytosine, respectively, from the corresponding mispairs with guanine in ds-DNA. It is capable of hydrolyzing the carbon-nitrogen bond between the sugar-phosphate backbone of the DNA and the mispaired base. The complementary strand guanine functions in substrate recognition. Required for DNA damage lesion repair in stationary-phase cells. The protein is G/U mismatch-specific DNA glycosylase of Citrobacter koseri (strain ATCC BAA-895 / CDC 4225-83 / SGSC4696).